The primary structure comprises 225 residues: Platelet-derived growth factor subunit B (225 aa).

The first 12 residues, 1–12 (LPLCCYLRLVSA), serve as a signal peptide directing secretion. A propeptide spans 13–73 (EGDPIPEELY…ESESSSRGRR (61 aa)) (removed in mature form). A glycan (N-linked (GlcNAc...) asparagine) is linked at Asn55. Disulfide bonds link Cys89–Cys133, Cys122–Cys170, and Cys126–Cys172. A propeptide spans 183 to 225 (RSPGTSREHRAKTPQTRVTVRTVRIRRPPKGKHRKFKHTHDKK) (removed in mature form).

This sequence belongs to the PDGF/VEGF growth factor family. Antiparallel homodimer; disulfide-linked. Antiparallel heterodimer with PDGFA; disulfide-linked. The PDGFB homodimer interacts with PDGFRA and PDGFRB homodimers, and with heterodimers formed by PDGFRA and PDGFRB. The heterodimer composed of PDGFA and PDGFB interacts with PDGFRB homodimers, and with heterodimers formed by PDGFRA and PDGFRB. Interacts with XLKD1. Interacts with LRP1. Interacts with SORL1 (via the N-terminal ectodomain). Interacts with CD82; this interaction inhibits PDGFB-mediated signaling pathway. In terms of tissue distribution, expressed in a distinct subpopulation of smooth muscle cells in injured arteries.

It is found in the secreted. Its function is as follows. Growth factor that plays an essential role in the regulation of embryonic development, cell proliferation, cell migration, survival and chemotaxis. Potent mitogen for cells of mesenchymal origin. Required for normal proliferation and recruitment of pericytes and vascular smooth muscle cells in the central nervous system, skin, lung, heart and placenta. Required for normal blood vessel development, and for normal development of kidney glomeruli. Plays an important role in wound healing. Signaling is modulated by the formation of heterodimers with PDGFA. The sequence is that of Platelet-derived growth factor subunit B (Pdgfb) from Rattus norvegicus (Rat).